Reading from the N-terminus, the 456-residue chain is 26S proteasome non-ATPase regulatory subunit 12 (456 aa).

Ala-2 is subject to N-acetylalanine. Lys-92 participates in a covalent cross-link: Glycyl lysine isopeptide (Lys-Gly) (interchain with G-Cter in SUMO1); alternate. Lys-92 participates in a covalent cross-link: Glycyl lysine isopeptide (Lys-Gly) (interchain with G-Cter in SUMO2); alternate. N6-acetyllysine occurs at positions 221 and 368. The PCI domain occupies 242 to 420 (SICKHYRAIY…GIINFQRPKD (179 aa)).

Belongs to the proteasome subunit p55 family. Component of the 19S proteasome regulatory particle complex. The 26S proteasome consists of a 20S core particle (CP) and two 19S regulatory subunits (RP). The regulatory particle is made of a lid composed of 9 subunits including PSMD12, a base containing 6 ATPases and few additional components. Interacts with ERCC6.

In terms of biological role, component of the 26S proteasome, a multiprotein complex involved in the ATP-dependent degradation of ubiquitinated proteins. This complex plays a key role in the maintenance of protein homeostasis by removing misfolded or damaged proteins, which could impair cellular functions, and by removing proteins whose functions are no longer required. Therefore, the proteasome participates in numerous cellular processes, including cell cycle progression, apoptosis, or DNA damage repair. The sequence is that of 26S proteasome non-ATPase regulatory subunit 12 (PSMD12) from Bos taurus (Bovine).